The primary structure comprises 181 residues: Ribulose bisphosphate carboxylase small subunit, chloroplastic 2 (181 aa).

The transit peptide at 1–57 directs the protein to the chloroplast; it reads MAFLIMSSAAAVATGTNAAQASMIAPFTGLKSATSFPVSRKQNLDITSIASNGGRVQ.

The protein belongs to the RuBisCO small chain family. In terms of assembly, heterohexadecamer of 8 large and 8 small subunits.

Its subcellular location is the plastid. It is found in the chloroplast. Its function is as follows. RuBisCO catalyzes two reactions: the carboxylation of D-ribulose 1,5-bisphosphate, the primary event in carbon dioxide fixation, as well as the oxidative fragmentation of the pentose substrate. Both reactions occur simultaneously and in competition at the same active site. Although the small subunit is not catalytic it is essential for maximal activity. This chain is Ribulose bisphosphate carboxylase small subunit, chloroplastic 2, found in Nicotiana sylvestris (Wood tobacco).